The primary structure comprises 175 residues: Orotate phosphoribosyltransferase (175 aa).

5-phospho-alpha-D-ribose 1-diphosphate is bound by residues Arg88, Lys89, Lys92, and 114–122 (EDVVTTARG). Residues Thr118 and Arg146 each contribute to the orotate site.

This sequence belongs to the purine/pyrimidine phosphoribosyltransferase family. PyrE subfamily. Homodimer. Mg(2+) serves as cofactor.

The enzyme catalyses orotidine 5'-phosphate + diphosphate = orotate + 5-phospho-alpha-D-ribose 1-diphosphate. It functions in the pathway pyrimidine metabolism; UMP biosynthesis via de novo pathway; UMP from orotate: step 1/2. Its function is as follows. Catalyzes the transfer of a ribosyl phosphate group from 5-phosphoribose 1-diphosphate to orotate, leading to the formation of orotidine monophosphate (OMP). The chain is Orotate phosphoribosyltransferase from Methanocella arvoryzae (strain DSM 22066 / NBRC 105507 / MRE50).